The primary structure comprises 109 residues: Fluorescence recovery protein (109 aa).

In terms of assembly, probably a dimer, interacts with the C-terminal domain of OCP-R.

The protein resides in the cellular thylakoid membrane. In terms of biological role, destabilizes orange carotenoid protein-R form (OCP-R), the FRP-OCP interaction accelerates the OCP-R to OCP-O conversion. Increases fluorescence recovery following non-photochemical quenching (NPQ) by OCP, most probably by destabilizing OCP-R binding to the phycobilisome core. This is Fluorescence recovery protein (frp) from Synechocystis sp. (strain ATCC 27184 / PCC 6803 / Kazusa).